Here is a 209-residue protein sequence, read N- to C-terminus: Uracil phosphoribosyltransferase (209 aa).

Residues arginine 79, arginine 104, and 131–139 (DPMLATGGS) contribute to the 5-phospho-alpha-D-ribose 1-diphosphate site. Uracil contacts are provided by residues isoleucine 194 and 199-201 (GDA). Aspartate 200 serves as a coordination point for 5-phospho-alpha-D-ribose 1-diphosphate.

It belongs to the UPRTase family. Mg(2+) is required as a cofactor.

It carries out the reaction UMP + diphosphate = 5-phospho-alpha-D-ribose 1-diphosphate + uracil. Its pathway is pyrimidine metabolism; UMP biosynthesis via salvage pathway; UMP from uracil: step 1/1. Allosterically activated by GTP. Catalyzes the conversion of uracil and 5-phospho-alpha-D-ribose 1-diphosphate (PRPP) to UMP and diphosphate. This chain is Uracil phosphoribosyltransferase, found in Clostridium perfringens (strain ATCC 13124 / DSM 756 / JCM 1290 / NCIMB 6125 / NCTC 8237 / Type A).